The sequence spans 144 residues: Large ribosomal subunit protein uL15 (144 aa).

The tract at residues 1–49 is disordered; the sequence is MRLNTLSPAAGAKSAAKRVGRGIGSGTGKTCGRGHKGQKSRSGGGVRVG. Positions 21-31 are enriched in gly residues; that stretch reads RGIGSGTGKTC.

It belongs to the universal ribosomal protein uL15 family. As to quaternary structure, part of the 50S ribosomal subunit.

In terms of biological role, binds to the 23S rRNA. This Shewanella sediminis (strain HAW-EB3) protein is Large ribosomal subunit protein uL15.